The chain runs to 222 residues: Small ribosomal subunit protein eS1 (222 aa).

This sequence belongs to the eukaryotic ribosomal protein eS1 family.

This is Small ribosomal subunit protein eS1 from Methanocaldococcus jannaschii (strain ATCC 43067 / DSM 2661 / JAL-1 / JCM 10045 / NBRC 100440) (Methanococcus jannaschii).